Here is a 345-residue protein sequence, read N- to C-terminus: MGVCGSLFQPWKCLVVVSLRLLFLVPTGVPVRSGDATFPKAMDNVTVRQGESATLRCTIDDRVTRVAWLNRSTILYAGNDKWSIDPRVIILVNTPTQYSIMIQNVDVYDEGPYTCSVQTDNHPKTSRVHLIVQVPPQIMNISSDVTVNEGSSVTLLCLAIGRPEPTVTWRHLSVKEGQGFVSEDEYLEISDIKRDQSGEYECSALNDVAAPDVRKVKITVNYPPYISKAKNTGVSVGQKGILSCEASAVPMAEFQWFKEDTRLATGLDGMRIENKGHISTLTFFNVSEKDYGNYTCVATNKLGITNASITLYGPGAVIDGVNSASRALACLWLSGTLFAHFFIKF.

The signal sequence occupies residues 1–27; sequence MGVCGSLFQPWKCLVVVSLRLLFLVPT. 3 Ig-like C2-type domains span residues 39 to 126, 136 to 219, and 223 to 310; these read PKAM…PKTS, PQIM…VKIT, and PPYI…ASIT. 3 N-linked (GlcNAc...) asparagine glycosylation sites follow: Asn44, Asn70, and Asn140. Residues Cys57 and Cys115 are joined by a disulfide bond. Intrachain disulfides connect Cys157-Cys202 and Cys244-Cys296. N-linked (GlcNAc...) asparagine glycosylation is found at Asn285, Asn293, and Asn306. Asn322 carries the GPI-anchor amidated asparagine lipid modification. The propeptide at 323–345 is removed in mature form; the sequence is SASRALACLWLSGTLFAHFFIKF.

The protein belongs to the immunoglobulin superfamily. IgLON family.

It is found in the cell membrane. Binds opioids in the presence of acidic lipids; probably involved in cell contact. In Bos taurus (Bovine), this protein is Opioid-binding protein/cell adhesion molecule (OPCML).